The sequence spans 195 residues: Myosin regulatory light chain, striated muscle, 25 kDa isoform (195 aa).

Residues 1–17 are compositionally biased toward basic and acidic residues; that stretch reads AKDKEKKEKKDKKKDDA. Residues 1 to 39 are disordered; sequence AKDKEKKEKKDKKKDDAPAEEAPAAAAAPAEEAAPTPSA. Low complexity predominate over residues 20–39; it reads EEAPAAAAAPAEEAAPTPSA. EF-hand domains lie at 55–90 and 124–159; these read NQIQ…IGRE and DTEG…VGDQ. The Ca(2+) site is built by Asp-68, Asp-70, Asp-72, and Asp-79.

In terms of assembly, myosin is a hexamer of 2 heavy chains and 4 light chains.

Plays an important role in regulation of muscle cell contractile activity. This chain is Myosin regulatory light chain, striated muscle, 25 kDa isoform, found in Lumbricus terrestris (Common earthworm).